The following is a 172-amino-acid chain: Interferon tau-2 (172 aa).

Cystine bridges form between Cys1–Cys99 and Cys29–Cys139. Asn78 carries an N-linked (GlcNAc...) asparagine glycan.

It belongs to the alpha/beta interferon family. IFN-alphaII subfamily. As to expression, constitutively and exclusively expressed in the mononuclear cells of the extraembryonic trophectoderm.

Its subcellular location is the secreted. Functionally, paracrine hormone primarily responsible for maternal recognition of pregnancy. Interacts with endometrial receptors, probably type I interferon receptors, and blocks estrogen receptor expression, preventing the estrogen-induced increase in oxytocin receptor expression in the endometrium. This results in the suppression of the pulsatile endometrial release of the luteolytic hormone prostaglandin F2-alpha, hindering the regression of the corpus luteum (luteolysis) and therefore a return to ovarian cyclicity. This, and a possible direct effect of IFN-tau on prostaglandin synthesis, leads in turn to continued ovarian progesterone secretion, which stimulates the secretion by the endometrium of the nutrients required for the growth of the conceptus. In summary, displays particularly high antiviral and antiproliferative potency concurrently with particular weak cytotoxicity, high antiluteolytic activity and immunomodulatory properties. In contrast with other IFNs, IFN-tau is not virally inducible. In Bos taurus (Bovine), this protein is Interferon tau-2 (IFNT2).